Reading from the N-terminus, the 123-residue chain is UPF0102 protein Pcar_2217 (123 aa).

It belongs to the UPF0102 family.

This is UPF0102 protein Pcar_2217 from Syntrophotalea carbinolica (strain DSM 2380 / NBRC 103641 / GraBd1) (Pelobacter carbinolicus).